A 465-amino-acid polypeptide reads, in one-letter code: Methylenetetrahydrofolate--tRNA-(uracil-5-)-methyltransferase TrmFO (465 aa).

An FAD-binding site is contributed by 3–8 (GAGLAG).

This sequence belongs to the MnmG family. TrmFO subfamily. FAD serves as cofactor.

The protein resides in the cytoplasm. It carries out the reaction uridine(54) in tRNA + (6R)-5,10-methylene-5,6,7,8-tetrahydrofolate + NADH + H(+) = 5-methyluridine(54) in tRNA + (6S)-5,6,7,8-tetrahydrofolate + NAD(+). The enzyme catalyses uridine(54) in tRNA + (6R)-5,10-methylene-5,6,7,8-tetrahydrofolate + NADPH + H(+) = 5-methyluridine(54) in tRNA + (6S)-5,6,7,8-tetrahydrofolate + NADP(+). Functionally, catalyzes the folate-dependent formation of 5-methyl-uridine at position 54 (M-5-U54) in all tRNAs. This chain is Methylenetetrahydrofolate--tRNA-(uracil-5-)-methyltransferase TrmFO, found in Bradyrhizobium sp. (strain ORS 278).